Here is a 369-residue protein sequence, read N- to C-terminus: tRNA-specific 2-thiouridylase MnmA (369 aa).

Residues 7–14 (GISGGVDS) and Met-33 contribute to the ATP site. The interval 93-95 (NPD) is interaction with target base in tRNA. Cys-98 (nucleophile) is an active-site residue. An intrachain disulfide couples Cys-98 to Cys-195. Residue Gly-123 coordinates ATP. The interval 145–147 (KDQ) is interaction with tRNA. Catalysis depends on Cys-195, which acts as the Cysteine persulfide intermediate. Residues 307 to 308 (RY) are interaction with tRNA.

It belongs to the MnmA/TRMU family. Interacts with TusE.

It is found in the cytoplasm. The catalysed reaction is S-sulfanyl-L-cysteinyl-[protein] + uridine(34) in tRNA + AH2 + ATP = 2-thiouridine(34) in tRNA + L-cysteinyl-[protein] + A + AMP + diphosphate + H(+). In terms of biological role, catalyzes the 2-thiolation of uridine at the wobble position (U34) of tRNA(Lys), tRNA(Glu) and tRNA(Gln), leading to the formation of s(2)U34, the first step of tRNA-mnm(5)s(2)U34 synthesis. Sulfur is provided by IscS, via a sulfur-relay system. Binds ATP and its substrate tRNAs. This is tRNA-specific 2-thiouridylase MnmA from Blochmanniella floridana.